We begin with the raw amino-acid sequence, 1220 residues long: DNA-directed RNA polymerase subunit beta (1220 aa).

This sequence belongs to the RNA polymerase beta chain family. In terms of assembly, the RNAP catalytic core consists of 2 alpha, 1 beta, 1 beta' and 1 omega subunit. When a sigma factor is associated with the core the holoenzyme is formed, which can initiate transcription.

It catalyses the reaction RNA(n) + a ribonucleoside 5'-triphosphate = RNA(n+1) + diphosphate. Functionally, DNA-dependent RNA polymerase catalyzes the transcription of DNA into RNA using the four ribonucleoside triphosphates as substrates. This is DNA-directed RNA polymerase subunit beta from Mesomycoplasma hyopneumoniae (strain J / ATCC 25934 / NCTC 10110) (Mycoplasma hyopneumoniae).